Here is a 215-residue protein sequence, read N- to C-terminus: TLD domain-containing protein 2 (215 aa).

The segment at 1–46 (MRGLRWRYTRLPSQVEDTLSGEEGNEEEEEEEAAPDPAAAPEDPTV) is disordered. Over residues 19–34 (LSGEEGNEEEEEEEAA) the composition is skewed to acidic residues. Residues 54-215 (QVLSASEIRQ…IQELEAWLLS (162 aa)) form the TLDc domain.

The protein belongs to the OXR1 family.

In Homo sapiens (Human), this protein is TLD domain-containing protein 2 (TLDC2).